We begin with the raw amino-acid sequence, 369 residues long: MTPNIYQQLGLKKVINACGKMTILGVSSVAPEVMQATARAASAFVEIDALVEKTGELVSRYTGAEDSYITSCASAGIAIAVAAAITHGDRARVALMPDSSGMANEVVMLRGHNVDYGAPVTSAIRLGGGRIVEVGSSNLATRWQLESAINEKTAALLYVKSHHCVQKGMLSIDDFVQVAQANHLPLIVDAAAEEDLRGWVASGADMVIYSGAKAFNAPTSGFITGRKTWIAACKAQHQGIARAMKIGKENMVGLVYALENYHQGQTTVTAAQLQPVAEAISAIHGLYADIEQDEAGRAIWRIRVRVNASELGLNAQDVEAQLRGGEIAIYARKYQLHQGVFSLDPRTVAEGEMALIVARLREIAEHAAD.

Lys213 is subject to N6-(pyridoxal phosphate)lysine.

The protein belongs to the SelA family. Requires pyridoxal 5'-phosphate as cofactor.

It catalyses the reaction 2-amino-2-deoxy-D-gluconate 6-phosphate = 2-dehydro-3-deoxy-6-phospho-D-gluconate + NH4(+). Functionally, involved in the catabolism of D-glucosaminate. Catalyzes the conversion of D-glucosaminate 6-phosphate to yield keto-3-deoxygluconate 6-phosphate (KDGP). This chain is D-glucosaminate-6-phosphate ammonia lyase, found in Salmonella typhimurium (strain 14028s / SGSC 2262).